The primary structure comprises 563 residues: Solute carrier family 22 member 6 (563 aa).

At 1–9 (MAFNDLLQQ) the chain is on the cytoplasmic side. The chain crosses the membrane as a helical span at residues 10 to 30 (VGGVGRFQQIQVTLVVLPLLL). Residues 31–135 (MASHNTLQNF…LVCSHRALRQ (105 aa)) lie on the Extracellular side of the membrane. N-linked (GlcNAc...) asparagine glycosylation is found at Asn-39, Asn-56, Asn-92, Asn-97, and Asn-113. A helical transmembrane segment spans residues 136–156 (LAQSLYMVGVLLGAMVFGYLA). Residues 157 to 164 (DRLGRRKV) lie on the Cytoplasmic side of the membrane. The chain crosses the membrane as a helical span at residues 165 to 187 (LILNYLQTAVSGTCAAFAPNFPI). Residues 188–190 (YCA) are Extracellular-facing. Residues 191 to 213 (FRLLSGMALAGISLNCMTLNVEW) traverse the membrane as a helical segment. Topologically, residues 214–224 (MPIHTRACVGT) are cytoplasmic. Residues 225–245 (LIGYVYSLGQFLLAGVAYAVP) form a helical membrane-spanning segment. Residues 246 to 248 (HWR) are Extracellular-facing. A helical membrane pass occupies residues 249 to 269 (HLQLLVSAPFFAFFIYSWFFI). Topologically, residues 270 to 337 (ESARWHSSSG…ELLRCPTLRH (68 aa)) are cytoplasmic. Residues 338 to 358 (LFLCLSMLWFATSFAYYGLVM) form a helical membrane-spanning segment. Residues 359–368 (DLQGFGVSIY) lie on the Extracellular side of the membrane. A helical membrane pass occupies residues 369 to 389 (LIQVIFGAVDLPAKLVGFLVI). The Cytoplasmic segment spans residues 390-395 (NSLGRR). Residues 396–416 (PAQMAALLLAGICILLNGVIP) traverse the membrane as a helical segment. Topologically, residues 417–425 (QDQSIVRTS) are extracellular. The helical transmembrane segment at 426-446 (LAVLGKGCLAASFNCIFLYTG) threads the bilayer. The Cytoplasmic portion of the chain corresponds to 447–455 (ELYPTMIRQ). The chain crosses the membrane as a helical span at residues 456–475 (TGMGMGSTMARVGSIVSPLV). Residues 476–484 (SMTAELYPS) lie on the Extracellular side of the membrane. The chain crosses the membrane as a helical span at residues 485–505 (MPLFIYGAVPVAASAVTVLLP). The Cytoplasmic segment spans residues 506–563 (ETLGQPLPDTVQDLESRWAPTQKEAGIYPRKGKQTRQQQEHQKYMVPLQASAQEKNGL). The segment at 525 to 563 (PTQKEAGIYPRKGKQTRQQQEHQKYMVPLQASAQEKNGL) is disordered.

This sequence belongs to the major facilitator (TC 2.A.1) superfamily. Organic cation transporter (TC 2.A.1.19) family. Glycosylated. Glycosylation at Asn-113 may occur at a secondary level. Glycosylation is necessary for proper targeting of the transporter to the plasma membrane. In terms of tissue distribution, strongly expressed in kidney. Expressed at lower level in liver, skeletal muscle, brain and placenta. In kidney, found at the basolateral membrane of the proximal tubule. In testis, primarily localized to the basal membrane of Sertoli cells and weakly expressed in Leydig cells and vascular endothelial cells.

Its subcellular location is the basolateral cell membrane. It is found in the basal cell membrane. It carries out the reaction (6R)-L-erythro-5,6,7,8-tetrahydrobiopterin(out) + a dicarboxylate(in) = (6R)-L-erythro-5,6,7,8-tetrahydrobiopterin(in) + a dicarboxylate(out). The enzyme catalyses L-erythro-7,8-dihydrobiopterin(out) + a dicarboxylate(in) = L-erythro-7,8-dihydrobiopterin(in) + a dicarboxylate(out). It catalyses the reaction L-sepiapterin(out) + a dicarboxylate(in) = L-sepiapterin(in) + a dicarboxylate(out). The catalysed reaction is prostaglandin F2alpha(out) + a dicarboxylate(in) = prostaglandin F2alpha(in) + a dicarboxylate(out). It carries out the reaction prostaglandin E2(out) + a dicarboxylate(in) = prostaglandin E2(in) + a dicarboxylate(out). The enzyme catalyses 3',5'-cyclic AMP(out) + a dicarboxylate(in) = 3',5'-cyclic AMP(in) + a dicarboxylate(out). It catalyses the reaction 3',5'-cyclic GMP(out) + a dicarboxylate(in) = 3',5'-cyclic GMP(in) + a dicarboxylate(out). The catalysed reaction is urate(out) + a dicarboxylate(in) = urate(in) + a dicarboxylate(out). It carries out the reaction kynurenate(out) + glutarate(in) = kynurenate(in) + glutarate(out). The enzyme catalyses (indol-3-yl)acetate(out) + a dicarboxylate(in) = (indol-3-yl)acetate(in) + a dicarboxylate(out). It catalyses the reaction indoxyl sulfate(out) + a dicarboxylate(in) = indoxyl sulfate(in) + a dicarboxylate(out). The catalysed reaction is N-benzoylglycine(out) + a dicarboxylate(in) = N-benzoylglycine(in) + a dicarboxylate(out). It carries out the reaction 3-carboxy-4-methyl-5-propyl-2-furanpropanoate(out) + a dicarboxylate(in) = 3-carboxy-4-methyl-5-propyl-2-furanpropanoate(in) + a dicarboxylate(out). In terms of biological role, secondary active transporter that functions as a Na(+)-independent organic anion (OA)/dicarboxylate antiporter where the uptake of one molecule of OA into the cell is coupled with an efflux of one molecule of intracellular dicarboxylate such as 2-oxoglutarate or glutarate. Mediates the uptake of OA across the basolateral side of proximal tubule epithelial cells, thereby contributing to the renal elimination of endogenous OA from the systemic circulation into the urine. Functions as a biopterin transporters involved in the uptake and the secretion of coenzymes tetrahydrobiopterin (BH4), dihydrobiopterin (BH2) and sepiapterin to urine, thereby determining baseline levels of blood biopterins. Transports prostaglandin E2 (PGE2) and prostaglandin F2-alpha (PGF2-alpha) and may contribute to their renal excretion. Also mediates the uptake of cyclic nucleotides such as cAMP and cGMP. Involved in the transport of neuroactive tryptophan metabolites kynurenate (KYNA) and xanthurenate (XA) and may contribute to their secretion from the brain. May transport glutamate. Also involved in the disposition of uremic toxins and potentially toxic xenobiotics by the renal organic anion secretory pathway, helping reduce their undesired toxicological effects on the body. Uremic toxins include the indoxyl sulfate (IS), hippurate/N-benzoylglycine (HA), indole acetate (IA), 3-carboxy-4- methyl-5-propyl-2-furanpropionate (CMPF) and urate. Xenobiotics include the mycotoxin ochratoxin (OTA). May also contribute to the transport of organic compounds in testes across the blood-testis-barrier. The sequence is that of Solute carrier family 22 member 6 from Homo sapiens (Human).